Reading from the N-terminus, the 132-residue chain is Glycine cleavage system H protein (132 aa).

One can recognise a Lipoyl-binding domain in the interval Ile-24–Arg-106. At Lys-65 the chain carries N6-lipoyllysine.

Belongs to the GcvH family. The glycine cleavage system is composed of four proteins: P, T, L and H. (R)-lipoate is required as a cofactor.

Its function is as follows. The glycine cleavage system catalyzes the degradation of glycine. The H protein shuttles the methylamine group of glycine from the P protein to the T protein. This Picosynechococcus sp. (strain ATCC 27264 / PCC 7002 / PR-6) (Agmenellum quadruplicatum) protein is Glycine cleavage system H protein.